Here is a 372-residue protein sequence, read N- to C-terminus: Cytochrome b (372 aa).

Transmembrane regions (helical) follow at residues 25–45 (FGSM…FLAI), 69–90 (WIMQ…YIHI), 105–125 (WLSG…GYVL), and 170–190 (FFAL…IHII). Heme b contacts are provided by His-75 and His-89. His-174 and His-188 together coordinate heme b. An a ubiquinone-binding site is contributed by His-193. The next 4 membrane-spanning stretches (helical) occupy residues 218 to 238 (YKDM…LSFS), 280 to 300 (LGGT…PFTH), 312 to 332 (LSQI…WTAT), and 339 to 358 (FISI…IMNP).

The protein belongs to the cytochrome b family. As to quaternary structure, the cytochrome bc1 complex contains 3 respiratory subunits (MT-CYB, CYC1 and UQCRFS1), 2 core proteins (UQCRC1 and UQCRC2) and probably 6 low-molecular weight proteins. It depends on heme b as a cofactor.

Its subcellular location is the mitochondrion inner membrane. Its function is as follows. Component of the ubiquinol-cytochrome c reductase complex (complex III or cytochrome b-c1 complex) that is part of the mitochondrial respiratory chain. The b-c1 complex mediates electron transfer from ubiquinol to cytochrome c. Contributes to the generation of a proton gradient across the mitochondrial membrane that is then used for ATP synthesis. This Walterinnesia aegyptia (Desert black snake) protein is Cytochrome b (MT-CYB).